The following is a 202-amino-acid chain: uncharacterized protein (202 aa).

Residues Leu116–Lys196 enclose the Smr domain.

This is an uncharacterized protein from Treponema pallidum (strain Nichols).